The following is a 729-amino-acid chain: ATP-dependent DNA helicase Hel308 (729 aa).

Residues Gln-28 and 46–53 (IPTASGKT) contribute to the ATP site. In terms of domain architecture, Helicase ATP-binding spans 33–199 (EKGLLEGRNL…WLEAELVVSE (167 aa)). A DEAH box motif is present at residues 144–147 (DEVH). The region spanning 232–426 (AVNLALDTLK…SKLGTENALR (195 aa)) is the Helicase C-terminal domain. The disordered stretch occupies residues 706–729 (SSGIIASEPPEKSPYSGQKTISDY). Residues 720–729 (YSGQKTISDY) show a composition bias toward polar residues.

It belongs to the helicase family. Hel308 subfamily. In terms of assembly, monomer.

It catalyses the reaction Couples ATP hydrolysis with the unwinding of duplex DNA by translocating in the 3'-5' direction.. The enzyme catalyses ATP + H2O = ADP + phosphate + H(+). Functionally, DNA-dependent ATPase and 3'-5' DNA helicase that may be involved in repair of stalled replication forks. In Methanosarcina barkeri (strain Fusaro / DSM 804), this protein is ATP-dependent DNA helicase Hel308.